Here is a 248-residue protein sequence, read N- to C-terminus: Positive alginate biosynthesis regulatory protein (248 aa).

In terms of domain architecture, Response regulatory spans 2 to 117 (NVLIVDDEPL…DLAEALKKAS (116 aa)). Asp54 is modified (4-aspartylphosphate). In terms of domain architecture, HTH LytTR-type spans 142-247 (ISARTRKGIE…VAGVRRLMHQ (106 aa)).

It participates in glycan biosynthesis; alginate biosynthesis [regulation]. Positive regulator of the algD gene, which codes for a GDP-mannose dehydrogenase, a key step enzyme in the alginate biosynthesis pathway. This chain is Positive alginate biosynthesis regulatory protein (algR), found in Pseudomonas aeruginosa (strain ATCC 15692 / DSM 22644 / CIP 104116 / JCM 14847 / LMG 12228 / 1C / PRS 101 / PAO1).